Consider the following 719-residue polypeptide: MFNKVTKSFQYGQHTVVLETGEIARQASGAVLVSVDDTVVLATVVAAKKAKPGQTFFPLTVDYIEKTYAAGRIPGGFFKREGKPSEKETLTSRLIDRPLRPLFPEGFYNEVQVVLHTVSVNPEIDPDIPAMIGASAALAISGIPFNGPIGAARVGYVDGQYVLNPTATQLKSSQMDLVVAGTENAVLMVESEAKQLSEDVMLGGVVYGHEQMQAAINAIHDLVRDAGKPDWEWQPEPKNEALIAAVTAAAQEKLVAAYQERQKQARTALLRNVYADVHAALAEQAAAAGQDAPDAVTVDNILFDLEARIVRGQILNGEPRIDGRDTRTVRPIEIRLGVLPRAHGSALFTRGETQALVVATLGTKQDEQIIDALMGEYRDRFMLHYNMPPFATGETGRIGVPKRREIGHGRLAKRALVSLLPAHEDFQYTIRLVSEITESNGSSSMASVCGGSLAMMDAGVPLQDHVAGVAMGLILDDGKFAVLTDILGDEDHLGDMDFKVAGTQNGITALQMDIKIQGITKEIMQVALAQAREGRLHILGKMREALEGSRGELSAFAPRMLTIKINPEKIRDVIGKGGATIRALTEETGTQIDISDDGTIVIASVDEAQAKEAQRRIVELTADVEVGQVYDGSVLRLLDFGAIVQVLPGRDGLLHISEIANYRIANINDVLKVGQQVRVKVIEADDKGRLRLSVKAIGGIEQQQAGGAEPAAQPESQAE.

Aspartate 491 and aspartate 497 together coordinate Mg(2+). In terms of domain architecture, KH spans proline 558–isoleucine 617. The S1 motif domain occupies glycine 627 to lysine 695.

Belongs to the polyribonucleotide nucleotidyltransferase family. Mg(2+) serves as cofactor.

The protein localises to the cytoplasm. The enzyme catalyses RNA(n+1) + phosphate = RNA(n) + a ribonucleoside 5'-diphosphate. In terms of biological role, involved in mRNA degradation. Catalyzes the phosphorolysis of single-stranded polyribonucleotides processively in the 3'- to 5'-direction. The polypeptide is Polyribonucleotide nucleotidyltransferase (Bordetella petrii (strain ATCC BAA-461 / DSM 12804 / CCUG 43448)).